A 480-amino-acid polypeptide reads, in one-letter code: Gasdermin-C4 (480 aa).

The tract at residues 1 to 226 is triggers pyroptosis; the sequence is MGYSFDRASK…TCVILPSATK (226 aa).

Belongs to the gasdermin family. As to quaternary structure, homooligomer; homooligomeric ring-shaped pore complex containing 27-28 subunits when inserted in the membrane. In terms of processing, cleavage by CASP8 relieves autoinhibition by releasing the N-terminal moiety (Gasdermin-C4, N-terminal) that initiates pyroptosis. Palmitoylated.

It localises to the cytoplasm. It is found in the cytosol. The protein localises to the cell membrane. With respect to regulation, the full-length protein before cleavage is inactive: intramolecular interactions between N- and C-terminal domains mediate autoinhibition in the absence of activation signal. The intrinsic pyroptosis-inducing activity is carried by the released N-terminal moiety (Gasdermin-C4, N-terminal) following cleavage by caspase CASP8. This form constitutes the precursor of the pore-forming protein: upon cleavage, the released N-terminal moiety (Gasdermin-C4, N-terminal) binds to membranes and forms pores, triggering pyroptosis. In terms of biological role, pore-forming protein that causes membrane permeabilization and pyroptosis. Produced by the cleavage of gasdermin-C4 by caspase CASP8 in response to death signals. After cleavage, moves to the plasma membrane where it strongly binds to membrane inner leaflet lipids. Homooligomerizes within the membrane and forms pores of 10-15 nanometers (nm) of inner diameter, triggering pyroptosis. The polypeptide is Gasdermin-C4 (Mus musculus (Mouse)).